Here is a 252-residue protein sequence, read N- to C-terminus: Probable transcriptional regulatory protein HNE_0161 (252 aa).

The protein belongs to the TACO1 family.

It is found in the cytoplasm. This chain is Probable transcriptional regulatory protein HNE_0161, found in Hyphomonas neptunium (strain ATCC 15444).